Here is a 601-residue protein sequence, read N- to C-terminus: Proline--tRNA ligase (601 aa).

It belongs to the class-II aminoacyl-tRNA synthetase family. ProS type 1 subfamily. As to quaternary structure, homodimer.

It localises to the cytoplasm. The catalysed reaction is tRNA(Pro) + L-proline + ATP = L-prolyl-tRNA(Pro) + AMP + diphosphate. Functionally, catalyzes the attachment of proline to tRNA(Pro) in a two-step reaction: proline is first activated by ATP to form Pro-AMP and then transferred to the acceptor end of tRNA(Pro). As ProRS can inadvertently accommodate and process non-cognate amino acids such as alanine and cysteine, to avoid such errors it has two additional distinct editing activities against alanine. One activity is designated as 'pretransfer' editing and involves the tRNA(Pro)-independent hydrolysis of activated Ala-AMP. The other activity is designated 'posttransfer' editing and involves deacylation of mischarged Ala-tRNA(Pro). The misacylated Cys-tRNA(Pro) is not edited by ProRS. The sequence is that of Proline--tRNA ligase from Picosynechococcus sp. (strain ATCC 27264 / PCC 7002 / PR-6) (Agmenellum quadruplicatum).